We begin with the raw amino-acid sequence, 195 residues long: ATP-dependent Clp protease proteolytic subunit (195 aa).

The Nucleophile role is filled by S96. Residue H121 is part of the active site.

It belongs to the peptidase S14 family. Fourteen ClpP subunits assemble into 2 heptameric rings which stack back to back to give a disk-like structure with a central cavity, resembling the structure of eukaryotic proteasomes.

It is found in the cytoplasm. The catalysed reaction is Hydrolysis of proteins to small peptides in the presence of ATP and magnesium. alpha-casein is the usual test substrate. In the absence of ATP, only oligopeptides shorter than five residues are hydrolyzed (such as succinyl-Leu-Tyr-|-NHMec, and Leu-Tyr-Leu-|-Tyr-Trp, in which cleavage of the -Tyr-|-Leu- and -Tyr-|-Trp bonds also occurs).. Its function is as follows. Cleaves peptides in various proteins in a process that requires ATP hydrolysis. Has a chymotrypsin-like activity. Plays a major role in the degradation of misfolded proteins. The protein is ATP-dependent Clp protease proteolytic subunit of Elusimicrobium minutum (strain Pei191).